The chain runs to 88 residues: DNA-directed RNA polymerase subunit omega (88 aa).

This sequence belongs to the RNA polymerase subunit omega family. As to quaternary structure, the RNAP catalytic core consists of 2 alpha, 1 beta, 1 beta' and 1 omega subunit. When a sigma factor is associated with the core the holoenzyme is formed, which can initiate transcription.

It carries out the reaction RNA(n) + a ribonucleoside 5'-triphosphate = RNA(n+1) + diphosphate. In terms of biological role, promotes RNA polymerase assembly. Latches the N- and C-terminal regions of the beta' subunit thereby facilitating its interaction with the beta and alpha subunits. The chain is DNA-directed RNA polymerase subunit omega from Salinispora arenicola (strain CNS-205).